We begin with the raw amino-acid sequence, 206 residues long: Ras-related protein ralB-A (206 aa).

21-28 (GSGGVGKS) is a GTP binding site. An Effector region motif is present at residues 43-51 (YEPTKADSY). Residues 68 to 72 (DTAGQ) and 128 to 131 (NKSD) each bind GTP. Basic and acidic residues predominate over residues 180 to 189 (KMSENKDKNG). The interval 180–206 (KMSENKDKNGKKSGKSKKGFKQRCCLL) is disordered. Basic residues predominate over residues 190 to 200 (KKSGKSKKGFK). Cys-203 is subject to Cysteine methyl ester. Cys-203 carries the S-geranylgeranyl cysteine lipid modification. A propeptide spans 204–206 (CLL) (removed in mature form).

Belongs to the small GTPase superfamily. Ras family. In terms of assembly, interacts with ralbp1 and rap1gds1. In terms of tissue distribution, weakly expressed in adult tissues and highest levels were found in heart, brain and testes.

The protein resides in the cell membrane. It is found in the midbody. It carries out the reaction GTP + H2O = GDP + phosphate + H(+). Functionally, multifunctional GTPase involved in a variety of cellular processes including gene expression, cell migration, cell proliferation, oncogenic transformation and membrane trafficking. Accomplishes its multiple functions by interacting with distinct downstream effectors. Acts as a GTP sensor for GTP-dependent exocytosis of dense core vesicles. Required both to stabilize the assembly of the exocyst complex and to localize functional exocyst complexes to the leading edge of migrating cells. Required for suppression of apoptosis. In late stages of cytokinesis, upon completion of the bridge formation between dividing cells, mediates exocyst recruitment to the midbody to drive abscission. Regulates the actin cytoskeleton to play a role in gastrulation or neurulation. During the cleavage stages, the GTP-bound form induces a cortical reaction that affects the localization of pigment granules. Activated by the FGF pathway via ras and ral-GDS, but independently of raf. Directs ralbp1 to the plasma membrane. Involved in ligand-dependent receptor mediated endocytosis of the EGF and insulin receptors. This Xenopus laevis (African clawed frog) protein is Ras-related protein ralB-A (ralb-a).